The sequence spans 49 residues: Sperm protamine P1 (49 aa).

This sequence belongs to the protamine P1 family. Testis.

Its subcellular location is the nucleus. The protein localises to the chromosome. Functionally, protamines substitute for histones in the chromatin of sperm during the haploid phase of spermatogenesis. They compact sperm DNA into a highly condensed, stable and inactive complex. This is Sperm protamine P1 (PRM1) from Pteropus hypomelanus (Island flying fox).